The sequence spans 141 residues: Large ribosomal subunit protein uL16 (141 aa).

It belongs to the universal ribosomal protein uL16 family. In terms of assembly, part of the 50S ribosomal subunit.

Binds 23S rRNA and is also seen to make contacts with the A and possibly P site tRNAs. The protein is Large ribosomal subunit protein uL16 of Microchaete diplosiphon (Fremyella diplosiphon).